Reading from the N-terminus, the 1056-residue chain is Carbamoyl phosphate synthase large chain (1056 aa).

The tract at residues 1–399 (MKIDVSKVIV…AFQKAIRMLD (399 aa)) is carboxyphosphate synthetic domain. Positions 127, 167, 173, 174, 206, 208, 213, 239, 240, 241, 282, and 296 each coordinate ATP. The 195-residue stretch at 131–325 (QKTMKKVGLP…LAYIATKLAI (195 aa)) folds into the ATP-grasp 1 domain. Residues Q282, E296, and N298 each contribute to the Mg(2+) site. Mn(2+) is bound by residues Q282, E296, and N298. The interval 400–536 (IGDELIGKYY…VTYDGVENDI (137 aa)) is oligomerization domain. The tract at residues 537–919 (PKPKKPSILV…LKSWLSVKPN (383 aa)) is carbamoyl phosphate synthetic domain. One can recognise an ATP-grasp 2 domain in the interval 661–849 (SKLLEKLGIP…LMELSAQAVL (189 aa)). ATP-binding residues include R697, K736, I738, E742, G766, V767, H768, S769, Q809, and E820. Mg(2+) is bound by residues Q809, E820, and N822. Q809, E820, and N822 together coordinate Mn(2+). One can recognise an MGS-like domain in the interval 915–1043 (SVKPNELPKT…REYWIRKIEE (129 aa)). Positions 920–1056 (ELPKTSALIY…EYAASVVLRR (137 aa)) are allosteric domain.

Belongs to the CarB family. In terms of assembly, composed of two chains; the small (or glutamine) chain promotes the hydrolysis of glutamine to ammonia, which is used by the large (or ammonia) chain to synthesize carbamoyl phosphate. Tetramer of heterodimers (alpha,beta)4. Requires Mg(2+) as cofactor. Mn(2+) serves as cofactor.

It catalyses the reaction hydrogencarbonate + L-glutamine + 2 ATP + H2O = carbamoyl phosphate + L-glutamate + 2 ADP + phosphate + 2 H(+). It carries out the reaction hydrogencarbonate + NH4(+) + 2 ATP = carbamoyl phosphate + 2 ADP + phosphate + 2 H(+). Its pathway is amino-acid biosynthesis; L-arginine biosynthesis; carbamoyl phosphate from bicarbonate: step 1/1. The protein operates within pyrimidine metabolism; UMP biosynthesis via de novo pathway; (S)-dihydroorotate from bicarbonate: step 1/3. Its function is as follows. Large subunit of the glutamine-dependent carbamoyl phosphate synthetase (CPSase). CPSase catalyzes the formation of carbamoyl phosphate from the ammonia moiety of glutamine, carbonate, and phosphate donated by ATP, constituting the first step of 2 biosynthetic pathways, one leading to arginine and/or urea and the other to pyrimidine nucleotides. The large subunit (synthetase) binds the substrates ammonia (free or transferred from glutamine from the small subunit), hydrogencarbonate and ATP and carries out an ATP-coupled ligase reaction, activating hydrogencarbonate by forming carboxy phosphate which reacts with ammonia to form carbamoyl phosphate. The sequence is that of Carbamoyl phosphate synthase large chain from Pyrococcus furiosus (strain ATCC 43587 / DSM 3638 / JCM 8422 / Vc1).